The sequence spans 158 residues: Low molecular weight phosphotyrosine protein phosphatase (158 aa).

A2 carries the N-acetylalanine modification. C13 serves as the catalytic Nucleophile. R19 is an active-site residue. D130 (proton donor) is an active-site residue. A phosphotyrosine mark is found at Y132 and Y133.

The protein belongs to the low molecular weight phosphotyrosine protein phosphatase family. As to quaternary structure, interacts with EPHA2; dephosphorylates EPHA2. Interacts with EPHB1. Interacts with the SH3 domain of SPTAN1. Phosphorylated by LCK. Phosphorylation at Tyr-132 increases its phosphatase activity.

The protein localises to the cytoplasm. The enzyme catalyses O-phospho-L-tyrosyl-[protein] + H2O = L-tyrosyl-[protein] + phosphate. The catalysed reaction is a phosphate monoester + H2O = an alcohol + phosphate. Its activity is regulated as follows. Inhibited by sulfhydryl reagents. Acts on tyrosine phosphorylated proteins, low-MW aryl phosphates and natural and synthetic acyl phosphates with differences in substrate specificity between isoform 1 and isoform 2. This chain is Low molecular weight phosphotyrosine protein phosphatase (ACP1), found in Sus scrofa (Pig).